Here is a 354-residue protein sequence, read N- to C-terminus: Transcription factor HHO2 (354 aa).

Residues 93–102 (VQEEEEEDGE) show a composition bias toward acidic residues. A disordered region spans residues 93–112 (VQEEEEEDGEHESSPELVNN). The span at 103-112 (HESSPELVNN) shows a compositional bias: basic and acidic residues. Residues 212–272 (THRKQRRCWS…HLQKYRLHTR (61 aa)) form the HTH myb-type domain. A DNA-binding region (H-T-H motif) is located at residues 243 to 268 (PKQIRDHMKVDGLTNDEVKSHLQKYR). The interval 324-354 (VAQSPKRSLERSCNSPAASSSTNTNTSTPVS) is disordered. A compositionally biased stretch (low complexity) spans 337 to 354 (NSPAASSSTNTNTSTPVS).

The protein resides in the nucleus. In terms of biological role, probable transcription factor involved in phosphate homeostasis. Involved in the regulation of the developmental response of lateral roots, acquisition and/or mobilization of phosphate and expression of a subset of genes involved in phosphate sensing and signaling pathway. Is a target of the transcription factor PHR1. The sequence is that of Transcription factor HHO2 from Arabidopsis thaliana (Mouse-ear cress).